The sequence spans 192 residues: Glutaredoxin-C9 (192 aa).

The Glutaredoxin domain maps to 89–191 (YERVARMASG…PLLKQAGALW (103 aa)). Cysteines 109 and 112 form a disulfide. Positions 189 to 192 (ALWL) match the Responsive for interaction with TGA factors motif.

The protein belongs to the glutaredoxin family. CC-type subfamily.

It is found in the cytoplasm. It localises to the nucleus. Its function is as follows. Has a glutathione-disulfide oxidoreductase activity in the presence of NADPH and glutathione reductase. Reduces low molecular weight disulfides and proteins. The sequence is that of Glutaredoxin-C9 (GRXC9) from Oryza sativa subsp. japonica (Rice).